The primary structure comprises 367 residues: Chorismate synthase (367 aa).

R48 provides a ligand contact to NADP(+). FMN contacts are provided by residues 125–127 (RSS), 243–244 (NA), G283, 298–302 (KPTSS), and R324.

Belongs to the chorismate synthase family. In terms of assembly, homotetramer. It depends on FMNH2 as a cofactor.

The catalysed reaction is 5-O-(1-carboxyvinyl)-3-phosphoshikimate = chorismate + phosphate. The protein operates within metabolic intermediate biosynthesis; chorismate biosynthesis; chorismate from D-erythrose 4-phosphate and phosphoenolpyruvate: step 7/7. In terms of biological role, catalyzes the anti-1,4-elimination of the C-3 phosphate and the C-6 proR hydrogen from 5-enolpyruvylshikimate-3-phosphate (EPSP) to yield chorismate, which is the branch point compound that serves as the starting substrate for the three terminal pathways of aromatic amino acid biosynthesis. This reaction introduces a second double bond into the aromatic ring system. The sequence is that of Chorismate synthase from Psychrobacter arcticus (strain DSM 17307 / VKM B-2377 / 273-4).